A 138-amino-acid chain; its full sequence is Actophorin (138 aa).

The residue at position 2 (Ser2) is a Blocked amino end (Ser). Positions 3–134 (GIAVSDDCVQ…SEDAVSERAK (132 aa)) constitute an ADF-H domain.

Belongs to the actin-binding proteins ADF family. Monomer.

The protein resides in the cytoplasm. Forms a one to one complex with monomeric actin. Can regulate the pool available for polymerization. Severs actin filaments in a dose-dependent manner. In Acanthamoeba castellanii (Amoeba), this protein is Actophorin.